The sequence spans 157 residues: Isotocin-neurophysin IT 1 (157 aa).

A signal peptide spans 1–20 (MFGTSVSALCLLFLLSVCTA). C21 and C26 are disulfide-bonded. G29 carries the glycine amide modification. 7 cysteine pairs are disulfide-bonded: C42/C86, C45/C59, C53/C76, C60/C66, C93/C106, C100/C118, and C107/C112.

This sequence belongs to the vasopressin/oxytocin family. Seven disulfide bonds are present in neurophysin.

It localises to the secreted. Its function is as follows. Isotocin causes contraction of smooth muscles. In Oncorhynchus masou (Cherry salmon), this protein is Isotocin-neurophysin IT 1.